We begin with the raw amino-acid sequence, 798 residues long: Acetyl-CoA decarbonylase/synthase complex subunit alpha 2 (798 aa).

Residues Cys-65, Cys-68, Cys-69, Cys-71, Cys-76, and Cys-86 each coordinate [4Fe-4S] cluster. His-109 lines the CO pocket. [Ni-4Fe-4S] cluster-binding residues include His-246, Cys-274, and Cys-313. 4Fe-4S ferredoxin-type domains lie at 395–424 and 434–463; these read EEQF…IGEA and SKLE…IDMY. [4Fe-4S] cluster is bound by residues Cys-405, Cys-408, Cys-411, Cys-415, Cys-443, Cys-446, Cys-449, and Cys-453. [Ni-4Fe-4S] cluster is bound by residues Cys-511, Cys-540, and Cys-575.

The protein belongs to the Ni-containing carbon monoxide dehydrogenase family. As to quaternary structure, heterotetramer of two alpha and two epsilon subunits. The ACDS complex is made up of alpha, epsilon, beta, gamma and delta subunits with a probable stoichiometry of (alpha(2)epsilon(2))(4)-beta(8)-(gamma(1)delta(1))(8). [4Fe-4S] cluster is required as a cofactor. Requires [Ni-4Fe-4S] cluster as cofactor.

The enzyme catalyses CO + 2 oxidized [2Fe-2S]-[ferredoxin] + H2O = 2 reduced [2Fe-2S]-[ferredoxin] + CO2 + 2 H(+). Functionally, part of the ACDS complex that catalyzes the reversible cleavage of acetyl-CoA, allowing autotrophic growth from CO(2). The alpha-epsilon subcomponent functions as a carbon monoxide dehydrogenase. The sequence is that of Acetyl-CoA decarbonylase/synthase complex subunit alpha 2 from Archaeoglobus fulgidus (strain ATCC 49558 / DSM 4304 / JCM 9628 / NBRC 100126 / VC-16).